The primary structure comprises 2359 residues: Neuron navigator 3 (2359 aa).

Residues 77–184 (IEDSKIYTDW…LFFSLSRYKQ (108 aa)) enclose the Calponin-homology (CH) domain. Polar residues-rich tracts occupy residues 204–226 (THTAPQSEASQAKTQQDMQSSLT), 233–243 (SKHSGIATSQK), 257–279 (ASSSNKAQGASNLNRRSQSFNSI), and 300–317 (QPSSGINGNTQPPSTSGQ). 2 disordered regions span residues 204-623 (THTA…QQQH) and 641-660 (ENEGTSLPPADSCTSPTKMD). Residues 318-329 (PPASAIPSPSAS) show a composition bias toward low complexity. The segment covering 335-352 (KSMNVKHSATSTMLTVKQ) has biased composition (polar residues). Composition is skewed to low complexity over residues 353–363 (PSPATSPTPSS) and 427–439 (NSGLNSGGSTNSS). Residues 465–491 (PKEKEEKTRDKNKACAEKSGKEEKDQV) show a composition bias toward basic and acidic residues. Positions 522 to 536 (IPSSSGIPKPGSKVP) are enriched in low complexity. The segment covering 592-623 (ASPSSSCVMQVTHSSGQSPGNGAVQLPQQQQH) has biased composition (polar residues). Residues 680–708 (EARRMRTVKNIADLRQNLEETMSSLRGTQ) adopt a coiled-coil conformation. 4 disordered regions span residues 878–1315 (ADSW…SPLF), 1413–1472 (LSES…AMSS), 1653–1758 (GALN…KPSQ), and 1829–1855 (ETGNTAKPARPPSDSSSTASSSSSRQS). Composition is skewed to low complexity over residues 883-896 (DSSSVSSGLSDTLD) and 904-916 (NTTSSISSYSNIT). Residues 917–926 (VPSRKNTQLK) are compositionally biased toward polar residues. Residues 943–960 (EELKKAEGDCDSHGDGAA) show a composition bias toward basic and acidic residues. Composition is skewed to polar residues over residues 978–989 (QKASLSVSQTGS) and 997–1013 (QGGTPATARQKTSTSAL). Over residues 1017–1029 (GKTDDAKASEKGK) the composition is skewed to basic and acidic residues. 2 stretches are compositionally biased toward low complexity: residues 1077 to 1095 (GASTMITSSGATITSGSAT) and 1160 to 1173 (SSTSSIDSNVSSKS). The segment covering 1190 to 1199 (GRSSPVTVNQ) has biased composition (polar residues). 3 stretches are compositionally biased toward low complexity: residues 1209 to 1229 (VSDSESVSLSGSPKSSPTSAS), 1256 to 1266 (GAKAGGKSASA), and 1274 to 1285 (SSSVVLSPSTSL). Positions 1299 to 1308 (GSMGSAGGLS) are enriched in gly residues. The segment covering 1439–1448 (NQEEGKEWLR) has biased composition (basic and acidic residues). Over residues 1449 to 1461 (SHSTGGLQDTGNQ) the composition is skewed to polar residues. Residues Ser1462 and Ser1466 each carry the phosphoserine modification. Low complexity predominate over residues 1462 to 1472 (SPLVSPSAMSS). A coiled-coil region spans residues 1565 to 1656 (AEEKAHSEQI…AQAAIQGALN (92 aa)). Low complexity-rich tracts occupy residues 1675–1692 (SVSSINSATSHSSIGSGN) and 1749–1758 (SGSSSMKPSQ). A coiled-coil region spans residues 1768-1835 (EAEAEIILQL…LKAETGNTAK (68 aa)). Over residues 1841 to 1855 (SDSSSTASSSSSRQS) the composition is skewed to low complexity.

This sequence belongs to the Nav/unc-53 family. Present in neurons from central and peripheral nervous systems (at protein level). Highly expressed in brain cortex, midbrain, cerebellum and hippocampus.

Its subcellular location is the nucleus outer membrane. Functionally, plays a role in cell migration. May be involved in neuron regeneration. May regulate IL2 production by T-cells. The protein is Neuron navigator 3 (Nav3) of Mus musculus (Mouse).